A 642-amino-acid chain; its full sequence is Chaperone protein HtpG (642 aa).

The interval 1 to 349 (MSAATETEVR…SADLPLNVSR (349 aa)) is a; substrate-binding. Residues 216-238 (ELPPAPPAKEGEEPEPPKTPEWE) are disordered. Positions 224–236 (KEGEEPEPPKTPE) are enriched in basic and acidic residues. The interval 350–570 (EILQQNRQVE…AHDMSATLER (221 aa)) is b. Residues 571 to 642 (LLKEAGQEVP…VKRLNKLLMG (72 aa)) are c.

The protein belongs to the heat shock protein 90 family. As to quaternary structure, homodimer.

The protein resides in the cytoplasm. Molecular chaperone. Has ATPase activity. This Magnetococcus marinus (strain ATCC BAA-1437 / JCM 17883 / MC-1) protein is Chaperone protein HtpG.